We begin with the raw amino-acid sequence, 160 residues long: MLIAIWAMTQEGLIGNNNTLPWMIKQELAHFKKTTLFQALLMGRKTYESLPKVFEKRTIFLLSKDQNYRFEEKGSEVKVINDFWPLIKSYQANKEKDLFICGGKSVYEQTINECDQLIVSIIKKKYKGDQFLKVDLSKFVLNEVVEFEEFNVNYYRKKQQ.

One can recognise a DHFR domain in the interval 1–160; sequence MLIAIWAMTQ…NVNYYRKKQQ (160 aa). A substrate-binding site is contributed by 5-7; that stretch reads IWA. NADP(+) contacts are provided by residues 6–7 and 14–19; these read WA and IGNNNT. Glutamate 27 provides a ligand contact to substrate. 43–46 lines the NADP(+) pocket; that stretch reads GRKT. Arginine 57 contributes to the substrate binding site. NADP(+) contacts are provided by residues 62–65 and 101–106; these read LSKD and CGGKSV. Serine 120 is a binding site for substrate.

Belongs to the dihydrofolate reductase family.

The catalysed reaction is (6S)-5,6,7,8-tetrahydrofolate + NADP(+) = 7,8-dihydrofolate + NADPH + H(+). It participates in cofactor biosynthesis; tetrahydrofolate biosynthesis; 5,6,7,8-tetrahydrofolate from 7,8-dihydrofolate: step 1/1. In terms of biological role, key enzyme in folate metabolism. Catalyzes an essential reaction for de novo glycine and purine synthesis, and for DNA precursor synthesis. The protein is Dihydrofolate reductase (folA) of Mycoplasma genitalium (strain ATCC 33530 / DSM 19775 / NCTC 10195 / G37) (Mycoplasmoides genitalium).